A 381-amino-acid polypeptide reads, in one-letter code: L-lactate dehydrogenase (381 aa).

The region spanning 1–380 (MIISSANDYR…TRDALVDLSK (380 aa)) is the FMN hydroxy acid dehydrogenase domain. Y24 is a binding site for substrate. FMN-binding residues include S106 and Q127. Residue Y129 coordinates substrate. Position 155 (T155) interacts with FMN. R164 contributes to the substrate binding site. K251 provides a ligand contact to FMN. The active-site Proton acceptor is H275. R278 lines the substrate pocket. 306–330 (DSGIRNGLDIVRMLALGADATMLGR) lines the FMN pocket.

Belongs to the FMN-dependent alpha-hydroxy acid dehydrogenase family. FMN serves as cofactor.

It localises to the cell inner membrane. The catalysed reaction is (S)-lactate + A = pyruvate + AH2. Functionally, catalyzes the conversion of L-lactate to pyruvate. Is coupled to the respiratory chain. This chain is L-lactate dehydrogenase, found in Actinobacillus pleuropneumoniae serotype 5b (strain L20).